The chain runs to 321 residues: MFRGIYKGSLPPIDPSSIHHGESLADQLQDKDYYSVGWNQYFDQSRDIKLPGTENTFRIYESNVDVVDNGYLFVFLHGGGYTSLSWSLVVDKIKKKNLEKKVRMMCYDCRGHGETKTSDDSNLSIETMVDDCANLINYYQDIIYKNEGGGGGNDDDDQKERLKVIIVGHSMGGSVVIKTSSTNRINNLFGLIVIDVVEGTALLALSSMKSILAKRPKSFDSVKDAIKWSISSNTVKNIESARVSLYFINNFFFFFLTDWFSGLSKEFLSSMALKLLILAGTDRLDRELTIAQMQGKFQLILLPLCGHVIQEDVPTGPKINI.

Active-site residues include Ser-170, Asp-195, and His-307.

This sequence belongs to the AB hydrolase superfamily.

It catalyses the reaction [phosphatase 2A protein]-C-terminal L-leucine methyl ester + H2O = [phosphatase 2A protein]-C-terminal L-leucine + methanol + H(+). Functionally, demethylates proteins that have been reversibly carboxymethylated. This is Probable protein phosphatase methylesterase 1 (ppme1) from Dictyostelium discoideum (Social amoeba).